The following is a 2038-amino-acid chain: HEAT repeat-containing protein 5A (2038 aa).

HEAT repeat units follow at residues 850–887 and 1082–1119; these read EVRRLVLTLVLGALESPTPLLRCAASEAWARLAQVADD and LLRRAVLACLRQLVQREAAEVSEHAIMLARDGRDAAAD. The interval 1646–1668 is disordered; the sequence is RSAEVDDGASEKETLPEFGEGKD. The residue at position 1647 (serine 1647) is a Phosphoserine.

Belongs to the HEATR5 family.

In Mus musculus (Mouse), this protein is HEAT repeat-containing protein 5A (Heatr5a).